Reading from the N-terminus, the 438-residue chain is Enolase (438 aa).

2 residues coordinate substrate: H159 and E168. The Proton donor role is filled by E211. Residues D246, E297, and D322 each coordinate Mg(2+). E297 and D322 together coordinate substrate. The Proton acceptor role is filled by K347. Substrate is bound by residues 374–377 and K398; that span reads SHRS.

The protein belongs to the enolase family. In terms of assembly, homodimer. The cofactor is Mg(2+).

It is found in the cytoplasm. It catalyses the reaction (2R)-2-phosphoglycerate = phosphoenolpyruvate + H2O. The protein operates within carbohydrate degradation; glycolysis; pyruvate from D-glyceraldehyde 3-phosphate: step 4/5. This is Enolase (ENO1) from Cryphonectria parasitica (Chestnut blight fungus).